We begin with the raw amino-acid sequence, 219 residues long: MTKSIYEFWISQGKDKLRLPVLPEQIDISNTIQNESVKVASFGEITFIDKPGAKEISFSSFFPKKHSPLAEYKGFPSPENAIAKIEKWVKSKKPVQFLITGTKINLTCSIEVFSYTEGQKDIGDRDYEIKLKEYKTASPRKIKQKKKTKKKRPSKSAPKTYTVKKGDTLWDLAGKFYGDSTKWRKIWKVNKKAMIKRSKRNIRQPGHWIFPGQKLKIPQ.

The span at 139–154 (PRKIKQKKKTKKKRPS) shows a compositional bias: basic residues. A disordered region spans residues 139 to 160 (PRKIKQKKKTKKKRPSKSAPKT). The LysM domain occupies 159–217 (KTYTVKKGDTLWDLAGKFYGDSTKWRKIWKVNKKAMIKRSKRNIRQPGHWIFPGQKLKI).

This is an uncharacterized protein from Bacillus subtilis (strain 168).